The primary structure comprises 662 residues: DNA ligase (662 aa).

NAD(+) is bound by residues aspartate 34–aspartate 38, serine 83–isoleucine 84, and glutamate 113. Lysine 115 functions as the N6-AMP-lysine intermediate in the catalytic mechanism. NAD(+) is bound by residues arginine 136, glutamate 172, lysine 286, and lysine 310. Cysteine 404, cysteine 407, cysteine 422, and cysteine 427 together coordinate Zn(2+). The 80-residue stretch at lysine 583–glutamate 662 folds into the BRCT domain.

It belongs to the NAD-dependent DNA ligase family. LigA subfamily. Mg(2+) serves as cofactor. The cofactor is Mn(2+).

The enzyme catalyses NAD(+) + (deoxyribonucleotide)n-3'-hydroxyl + 5'-phospho-(deoxyribonucleotide)m = (deoxyribonucleotide)n+m + AMP + beta-nicotinamide D-nucleotide.. Its function is as follows. DNA ligase that catalyzes the formation of phosphodiester linkages between 5'-phosphoryl and 3'-hydroxyl groups in double-stranded DNA using NAD as a coenzyme and as the energy source for the reaction. It is essential for DNA replication and repair of damaged DNA. This chain is DNA ligase, found in Chlamydia pneumoniae (Chlamydophila pneumoniae).